We begin with the raw amino-acid sequence, 1110 residues long: Envelopment polyprotein (1110 aa).

Positions 1–8 are excised as a propeptide; the sequence is MALKETDA. Residues 1–290 are Lumenal-facing; that stretch reads MALKETDAKI…KYSKNIYKQT (290 aa). Residues 14–16 carry the Cell attachment site motif; it reads RGD. N-linked (GlcNAc...) asparagine; by host glycosylation is found at N46 and N92. Intrachain disulfides connect C90/C121 and C98/C132. The non-covalent dimerization stretch occupies residues 153-171; sequence IDNKRKLSIGTKFYIIESL. N186 carries N-linked (GlcNAc...) asparagine; by host glycosylation. C200 and C261 are oxidised to a cystine. Residues 291–342 form a helical membrane-spanning segment; sequence ACINFSWFRLIMIALIVYFPIRYLVNKTSKTLFYGYDLLGLITYPILLLINY. Residues 343-459 lie on the Cytoplasmic side of the membrane; sequence LWSYFPLKCK…VPGCDRFVTN (117 aa). The Lumenal portion of the chain corresponds to 460-1044; it reads RYDKCPEKDQ…HFGSFFDTVR (585 aa). N-linked (GlcNAc...) asparagine; by host glycans are attached at residues N566, N582, and N957. The helical transmembrane segment at 1045–1065 threads the bilayer; that stretch reads VVLLILFVFALAYLCSIVATM. At 1066–1110 the chain is on the cytoplasmic side; that stretch reads CRGYVRNKSYKTKYIEDTNDYSLVSTSSGKDTITRRRPPLDFSGI. The tract at residues 1091–1110 is disordered; sequence TSSGKDTITRRRPPLDFSGI.

Belongs to the tospovirus envelope glycoprotein family. As to quaternary structure, homodimer; disulfide-linked. Heterodimer with Glycoprotein C. Interacts with nucleoprotein. In terms of assembly, heterodimer with Glycoprotein N. Interacts with nucleoprotein. Post-translationally, specific enzymatic cleavages in vivo yield mature proteins including Glycoprotein N and Glycoprotein C. In terms of processing, glycosylated with O-linked glycans. Glycosylation is essential for proper subcellular location. Cleaved at acidic pH.

The protein localises to the virion membrane. The protein resides in the host Golgi apparatus membrane. Its subcellular location is the host endoplasmic reticulum membrane. Functionally, forms the spikes present at the surface of the virion together with Glycoprotein C. They are able to attach the virion to a cell receptor and to promote fusion of membranes after endocytosis of the virion. Plays a role in virus binding and/or entry into the vector midgut. In terms of biological role, forms the spikes present at the surface of the virion together with Glycoprotein N. They are able to attach the virion to a cell receptor and to promote fusion of membranes after endocytosis of the virion. Probable class II fusion protein. This is Envelopment polyprotein (GP) from Impatiens necrotic spot virus (INSV).